An 86-amino-acid polypeptide reads, in one-letter code: Omega-theraphotoxin-Hhn1f 3 (86 aa).

The signal sequence occupies residues 1 to 21 (MKSIVFVALFGLALLAVACSA). A propeptide spanning residues 22 to 50 (SEDAHKELLKEVVRAMVVDKTDAVQAEER) is cleaved from the precursor. 3 disulfides stabilise this stretch: C52/C66, C59/C71, and C65/C78.

The protein belongs to the neurotoxin 10 (Hwtx-1) family. 17 (Hntx-9) subfamily. As to expression, expressed by the venom gland.

The protein localises to the secreted. In terms of biological role, ion channel inhibitor. This chain is Omega-theraphotoxin-Hhn1f 3, found in Cyriopagopus hainanus (Chinese bird spider).